The following is a 107-amino-acid chain: Thioredoxin (107 aa).

The region spanning alanine 2 to arginine 107 is the Thioredoxin domain. Cysteine 33 and cysteine 36 are disulfide-bonded.

This sequence belongs to the thioredoxin family.

Its function is as follows. Component of the thioredoxin-thioredoxin reductase system. Participates in various redox reactions through the reversible oxidation of its active center dithiol to a disulfide and catalyzes dithiol-disulfide exchange reactions. The protein is Thioredoxin (trxA) of Streptomyces clavuligerus.